Consider the following 155-residue polypeptide: Small ribosomal subunit protein uS7c (155 aa).

The protein belongs to the universal ribosomal protein uS7 family. As to quaternary structure, part of the 30S ribosomal subunit.

Its subcellular location is the plastid. The protein resides in the chloroplast. Its function is as follows. One of the primary rRNA binding proteins, it binds directly to 16S rRNA where it nucleates assembly of the head domain of the 30S subunit. The polypeptide is Small ribosomal subunit protein uS7c (rps7) (Coelogyne cristata (Orchid)).